We begin with the raw amino-acid sequence, 73 residues long: Large ribosomal subunit protein bL31 (73 aa).

This sequence belongs to the bacterial ribosomal protein bL31 family. Type A subfamily. In terms of assembly, part of the 50S ribosomal subunit.

In terms of biological role, binds the 23S rRNA. In Chelativorans sp. (strain BNC1), this protein is Large ribosomal subunit protein bL31.